The following is a 342-amino-acid chain: Biotin synthase (342 aa).

The Radical SAM core domain maps to 36 to 260 (NRIQISTLLS…MMPKSYIRLS (225 aa)). [4Fe-4S] cluster contacts are provided by Cys-51, Cys-55, and Cys-58. Positions 95, 126, 186, and 258 each coordinate [2Fe-2S] cluster.

It belongs to the radical SAM superfamily. Biotin synthase family. In terms of assembly, homodimer. [4Fe-4S] cluster is required as a cofactor. Requires [2Fe-2S] cluster as cofactor.

It catalyses the reaction (4R,5S)-dethiobiotin + (sulfur carrier)-SH + 2 reduced [2Fe-2S]-[ferredoxin] + 2 S-adenosyl-L-methionine = (sulfur carrier)-H + biotin + 2 5'-deoxyadenosine + 2 L-methionine + 2 oxidized [2Fe-2S]-[ferredoxin]. It functions in the pathway cofactor biosynthesis; biotin biosynthesis; biotin from 7,8-diaminononanoate: step 2/2. In terms of biological role, catalyzes the conversion of dethiobiotin (DTB) to biotin by the insertion of a sulfur atom into dethiobiotin via a radical-based mechanism. This chain is Biotin synthase, found in Buchnera aphidicola subsp. Schizaphis graminum (strain Sg).